The primary structure comprises 513 residues: ATP synthase subunit alpha (513 aa).

Glycine 169–threonine 176 contributes to the ATP binding site.

This sequence belongs to the ATPase alpha/beta chains family. As to quaternary structure, F-type ATPases have 2 components, CF(1) - the catalytic core - and CF(0) - the membrane proton channel. CF(1) has five subunits: alpha(3), beta(3), gamma(1), delta(1), epsilon(1). CF(0) has three main subunits: a(1), b(2) and c(9-12). The alpha and beta chains form an alternating ring which encloses part of the gamma chain. CF(1) is attached to CF(0) by a central stalk formed by the gamma and epsilon chains, while a peripheral stalk is formed by the delta and b chains.

The protein localises to the cell inner membrane. The enzyme catalyses ATP + H2O + 4 H(+)(in) = ADP + phosphate + 5 H(+)(out). Produces ATP from ADP in the presence of a proton gradient across the membrane. The alpha chain is a regulatory subunit. The protein is ATP synthase subunit alpha of Cupriavidus necator (strain ATCC 17699 / DSM 428 / KCTC 22496 / NCIMB 10442 / H16 / Stanier 337) (Ralstonia eutropha).